Consider the following 382-residue polypeptide: UDP-4-amino-4-deoxy-L-arabinose--oxoglutarate aminotransferase (382 aa).

Position 183 is an N6-(pyridoxal phosphate)lysine (Lys-183).

This sequence belongs to the DegT/DnrJ/EryC1 family. ArnB subfamily. Homodimer. It depends on pyridoxal 5'-phosphate as a cofactor.

The catalysed reaction is UDP-4-amino-4-deoxy-beta-L-arabinose + 2-oxoglutarate = UDP-beta-L-threo-pentopyranos-4-ulose + L-glutamate. Its pathway is nucleotide-sugar biosynthesis; UDP-4-deoxy-4-formamido-beta-L-arabinose biosynthesis; UDP-4-deoxy-4-formamido-beta-L-arabinose from UDP-alpha-D-glucuronate: step 2/3. It functions in the pathway bacterial outer membrane biogenesis; lipopolysaccharide biosynthesis. Functionally, catalyzes the conversion of UDP-4-keto-arabinose (UDP-Ara4O) to UDP-4-amino-4-deoxy-L-arabinose (UDP-L-Ara4N). The modified arabinose is attached to lipid A and is required for resistance to polymyxin and cationic antimicrobial peptides. This chain is UDP-4-amino-4-deoxy-L-arabinose--oxoglutarate aminotransferase, found in Pseudomonas fluorescens (strain Pf0-1).